The chain runs to 118 residues: NADH-quinone oxidoreductase subunit A (118 aa).

The next 3 membrane-spanning stretches (helical) occupy residues Leu6–Ala26, Phe61–Ala81, and Leu87–Trp107.

The protein belongs to the complex I subunit 3 family. NDH-1 is composed of 14 different subunits. Subunits NuoA, H, J, K, L, M, N constitute the membrane sector of the complex.

It is found in the cell membrane. It catalyses the reaction a quinone + NADH + 5 H(+)(in) = a quinol + NAD(+) + 4 H(+)(out). In terms of biological role, NDH-1 shuttles electrons from NADH, via FMN and iron-sulfur (Fe-S) centers, to quinones in the respiratory chain. The immediate electron acceptor for the enzyme in this species is believed to be a menaquinone. Couples the redox reaction to proton translocation (for every two electrons transferred, four hydrogen ions are translocated across the cytoplasmic membrane), and thus conserves the redox energy in a proton gradient. This Clostridium beijerinckii (strain ATCC 51743 / NCIMB 8052) (Clostridium acetobutylicum) protein is NADH-quinone oxidoreductase subunit A.